Consider the following 334-residue polypeptide: MFRRERSIPLRSSAAALSNNLSVLQLPARDLTHFGVVHGPSAQLLSAAPEGVPLAQRQLHVKEGAGVSPPLITQVHWCVLPFRVLLVLTSHRGIQMYESDGSVMVYWHALDSGDASSVQAMFARGIAASVHFICVGTCSGRVLVFDIPAKGPNIVLSEELAGHQTPITDIATERAQGQDGVADMVTADDSGVLCVWRSGPEFTLLTRIPGFGVPCPSVQLWQGIVAAGYGNGQVRLYDASTGALHVQISAHARTISALDLAPEVGKLLSAAEDTFVHIWKLNRNPESGSIEVEHCHGECISDTQVCGARFCDPLGSSFAVTGYDLAEILRFGTV.

WD repeat units lie at residues 116–155, 162–206, and 250–289; these read SSVQ…PNIV, GHQT…TLLT, and AHAR…ESGS.

As to quaternary structure, homodimer and homotrimer; forms tight forms of dimers and trimers. Interacts with IZUMO1 and IZUMO1R/JUNO. Post-translationally, cross-linked to tightly form both dimers and trimers by TGM2. Cross-linking enhances the activation of EGF receptor-mediated signaling pathway. Cross-linking is inhibited by EGF. In terms of processing, ubiquitinated. EGF increases ubiquitination.

It localises to the vesicle. It is found in the cytoplasm. Its subcellular location is the cell membrane. Plays a role in the adhesion and fusion of the sperm-oocyte membrane through its interactions with IZUMO1 and IZUMO1R/JUNO. When cross-linked to form dimers and trimers, it has a regulatory effect on ERK signaling pathway activity in response to EGF stimulation. Colocalizes with the EGF receptor in WDR54-specific vesicle where it sustains the internalization and controls the degradation of the EGF receptor after EGF stimulation. The polypeptide is WD repeat-containing protein 54 (Mus musculus (Mouse)).